The chain runs to 110 residues: Small ribosomal subunit protein eS24 (110 aa).

The interval 91 to 110 (RNKVEEQAEEAEEAEAGAAE) is disordered. A compositionally biased stretch (acidic residues) spans 97-110 (QAEEAEEAEAGAAE).

Belongs to the eukaryotic ribosomal protein eS24 family.

The polypeptide is Small ribosomal subunit protein eS24 (Archaeoglobus fulgidus (strain ATCC 49558 / DSM 4304 / JCM 9628 / NBRC 100126 / VC-16)).